The following is a 715-amino-acid chain: Fatty acid oxidation complex subunit alpha (715 aa).

Residues 1–190 (MTTTSAFMLN…KAGLVDDVVP (190 aa)) are enoyl-CoA hydratase. Residues 306-715 (GPLNSVGILG…WTNGETDQGN (410 aa)) are 3-hydroxyacyl-CoA dehydrogenase.

In the N-terminal section; belongs to the enoyl-CoA hydratase/isomerase family. It in the central section; belongs to the 3-hydroxyacyl-CoA dehydrogenase family. In terms of assembly, heterotetramer of two alpha chains (FadJ) and two beta chains (FadI).

Its subcellular location is the cytoplasm. It carries out the reaction a (3S)-3-hydroxyacyl-CoA = a (2E)-enoyl-CoA + H2O. The enzyme catalyses a 4-saturated-(3S)-3-hydroxyacyl-CoA = a (3E)-enoyl-CoA + H2O. The catalysed reaction is a (3S)-3-hydroxyacyl-CoA + NAD(+) = a 3-oxoacyl-CoA + NADH + H(+). It catalyses the reaction (3S)-3-hydroxybutanoyl-CoA = (3R)-3-hydroxybutanoyl-CoA. Its pathway is lipid metabolism; fatty acid beta-oxidation. Functionally, catalyzes the formation of a hydroxyacyl-CoA by addition of water on enoyl-CoA. Also exhibits 3-hydroxyacyl-CoA epimerase and 3-hydroxyacyl-CoA dehydrogenase activities. The chain is Fatty acid oxidation complex subunit alpha from Salmonella paratyphi B (strain ATCC BAA-1250 / SPB7).